A 300-amino-acid chain; its full sequence is ETS homologous factor (300 aa).

Residues Pro29–Gly115 form the PNT domain. Positions Val181–Asn203 are disordered. Over residues Pro185–Val195 the composition is skewed to basic and acidic residues. The segment at residues Thr207 to Gly289 is a DNA-binding region (ETS).

The protein belongs to the ETS family. Highly expressed in kidney and lung, weakly in skeletal muscle, heart, and liver, and not detected in brain, spleen or testis.

The protein resides in the nucleus. In terms of biological role, transcriptional activator that may play a role in regulating epithelial cell differentiation and proliferation. May act as a repressor for a specific subset of ETS/AP-1-responsive genes, and as a modulator of the nuclear response to mitogen-activated protein kinase signaling cascades. Binds to DNA sequences containing the consensus nucleotide core sequence GGAA. Involved in regulation of TNFRSF10B/DR5 expression through Ets-binding sequences on the TNFRSF10B/DR5 promoter. The sequence is that of ETS homologous factor from Mus musculus (Mouse).